The sequence spans 2002 residues: [F-actin]-monooxygenase MICAL3 (2002 aa).

Residues 2 to 494 form a monooxygenase domain region; the sequence is EERKHETMNP…RHLYDTGETK (493 aa). FAD-binding positions include Cys97, 116 to 118, 123 to 125, Phe183, Tyr298, and Asp398; these read EKR and RNN. Residues 518–624 enclose the Calponin-homology (CH) domain; it reads VARSSKLLGW…YLTQFYEMFK (107 aa). A Phosphoserine modification is found at Ser649. The disordered stretch occupies residues 658 to 706; that stretch reads GQTISRKRSPKDKKEKDLDGAGKRRKTSQSEEEEAPRGHRGERPTLVST. Positions 663–684 match the Nuclear localization signal motif; sequence RKRSPKDKKEKDLDGAGKRRKT. The segment covering 669–679 has biased composition (basic and acidic residues); sequence DKKEKDLDGAG. Phosphoserine is present on residues Ser685 and Ser687. Positions 762–824 constitute an LIM zinc-binding domain; it reads DTCYFCQKRV…KPHYCYRLSG (63 aa). Zn(2+) contacts are provided by Cys764, Cys767, His785, Cys788, Cys791, Cys794, Cys814, and His817. Residues 835–883 form a disordered region; the sequence is PLSGKEAKGPLQDGATTDANGRANAVASSTERTPGSGVNGLEEPSIAKR. Thr887 is subject to Phosphothreonine. Disordered stretches follow at residues 907–1313, 1335–1776, and 1791–1821; these read QEVP…SPLA, RRSL…GKHR, and LSFSEDSDLSSDDVLEKSSQKSRREPRTYTE. Residues 938-950 are compositionally biased toward acidic residues; that stretch reads SEMEEEGEEEEEE. Ser977 carries the post-translational modification Phosphoserine. Acidic residues predominate over residues 991 to 1017; sequence NEEEEEEEEEYEEEEEEDYDEEEEESS. Residues 1041 to 1054 are compositionally biased toward basic and acidic residues; the sequence is HWTHIREREEEERM. A compositionally biased stretch (low complexity) spans 1055–1066; it reads APASESSASGAP. The segment covering 1068 to 1102 has biased composition (acidic residues); it reads DENDLEEDVDSEPAEIEGEAAEDGDPGDTGAELDD. Phosphoserine occurs at positions 1134, 1143, 1160, and 1192. Over residues 1150-1163 the composition is skewed to polar residues; that stretch reads GPSQATSPIRSPQE. Basic and acidic residues predominate over residues 1191 to 1218; the sequence is KSPEERLFPEPLLPKEKPKADAPSDLKA. Over residues 1239 to 1258 the composition is skewed to pro residues; it reads PGSPQPQPPVAASTPPPSPL. 2 stretches are compositionally biased toward polar residues: residues 1268 to 1280 and 1288 to 1302; these read TEATVPSPTQSPI and KTSTPLAPLPVQSQS. Ser1274 bears the Phosphoserine mark. Thr1276 carries the post-translational modification Phosphothreonine. Ser1278 is subject to Phosphoserine. Phosphoserine is present on residues Ser1310 and Ser1337. Residue Thr1341 is modified to Phosphothreonine. 2 positions are modified to phosphoserine: Ser1371 and Ser1384. Residues 1407 to 1422 are compositionally biased toward basic and acidic residues; sequence PSDRELRSAQEERREL. A compositionally biased stretch (low complexity) spans 1423–1435; sequence SSSSGLGLHGSSS. Ser1433 carries the phosphoserine modification. Polar residues predominate over residues 1436–1451; that stretch reads NMKTLGSQSFNTSDSA. The residue at position 1454 (Thr1454) is a Phosphothreonine. Residues 1456 to 1467 are compositionally biased toward pro residues; the sequence is PSSPPPPPPPGE. Over residues 1516–1530 the composition is skewed to acidic residues; the sequence is SVEEIPFADDVEDTY. The span at 1588–1604 shows a compositional bias: basic and acidic residues; it reads EAKELAEERMRAREKSV. Ser1649 carries the phosphoserine modification. Thr1651 is modified (phosphothreonine). Over residues 1657 to 1668 the composition is skewed to basic and acidic residues; the sequence is GSEEPTLKHEAT. The segment covering 1674-1694 has biased composition (low complexity); the sequence is SPPSDSGGPDGSFTSSEGSSG. The span at 1695-1713 shows a compositional bias: basic residues; sequence KSKKRSSLFSPRRNKKEKK. Ser1701 and Ser1704 each carry phosphoserine. Polar residues predominate over residues 1760–1769; that stretch reads CPSTPSSGAT. A compositionally biased stretch (basic and acidic residues) spans 1804–1820; that stretch reads VLEKSSQKSRREPRTYT. Residues 1821–1992 adopt a coiled-coil conformation; it reads EEELNAKLTR…EEDKDLEAAM (172 aa). The bMERB domain occupies 1841–1990; that stretch reads KQEELKRLHR…EREEDKDLEA (150 aa). Ser1912 carries the post-translational modification Phosphoserine.

Belongs to the Mical family. As to quaternary structure, interacts with RAB1B, RAB8A, RAB10, RAB13 and RAB15 (in their GTP-bound forms); binding to RAB1B is of low affinity compared to other Rab proteins; at least in case of RAB8A can bind 2 molecules of RAB8A simultaneously through a high and a low affinity binding site, respectively. Interacts with ERC1 and RAB8A; may bridge ERC1 with RAB8A. Interacts with KIF23 and ERC1; enhances the interaction between KIF23 and ERC1. Interacts with NINL isoform 2. It depends on FAD as a cofactor. As to expression, ubiquitous.

It localises to the cytoplasm. It is found in the cell cortex. The protein localises to the cytoskeleton. The protein resides in the nucleus. Its subcellular location is the midbody. It localises to the spindle. It is found in the cilium basal body. The enzyme catalyses L-methionyl-[F-actin] + NADPH + O2 + H(+) = L-methionyl-(R)-S-oxide-[F-actin] + NADP(+) + H2O. Monooxygenase that promotes depolymerization of F-actin by mediating oxidation of specific methionine residues on actin to form methionine-sulfoxide, resulting in actin filament disassembly and preventing repolymerization. In the absence of actin, it also functions as a NADPH oxidase producing H(2)O(2). Seems to act as Rab effector protein and plays a role in vesicle trafficking. Involved in exocytic vesicles tethering and fusion: the monooxygenase activity is required for this process and implicates RAB8A associated with exocytotic vesicles. Required for cytokinesis. Contributes to stabilization and/or maturation of the intercellular bridge independently of its monooxygenase activity. Promotes recruitment of Rab8 and ERC1 to the intercellular bridge, and together these proteins are proposed to function in timely abscission. This Homo sapiens (Human) protein is [F-actin]-monooxygenase MICAL3 (MICAL3).